The following is a 213-amino-acid chain: MDPKSKAPKRDETKGADDASGRRYLDGQLLIAMPVMEDERFARSVIYVCAHSSEGAMGIIVNRPAGSIDFPELLVQLEIIDKADQIKLPENAETMKVLKGGPVETGRGFVLHSSDFFIKDATLPIDEGICLTATVDILRAIARGAGPKHAILALGYAGWAPGQLETEIQGNGWLHCPADADLIFGGDIEAKYSRALHKIGIEPGMLSNEAGHA.

The segment at 1–20 (MDPKSKAPKRDETKGADDAS) is disordered.

It belongs to the UPF0301 (AlgH) family.

This is UPF0301 protein RPC_0788 from Rhodopseudomonas palustris (strain BisB18).